The sequence spans 720 residues: Catalase-peroxidase (720 aa).

Positions 82-207 (WHSAGTYRTF…LGNTVMGLIY (126 aa)) form a cross-link, tryptophyl-tyrosyl-methioninium (Trp-Tyr) (with M-233). The active-site Proton acceptor is the His83. Positions 207–233 (YVNPEGPNGEPDLEGSAKNIRESFGKM) form a cross-link, tryptophyl-tyrosyl-methioninium (Tyr-Met) (with W-82). Residue His248 coordinates heme b.

Belongs to the peroxidase family. Peroxidase/catalase subfamily. Homodimer or homotetramer. Heme b serves as cofactor. Post-translationally, formation of the three residue Trp-Tyr-Met cross-link is important for the catalase, but not the peroxidase activity of the enzyme.

The catalysed reaction is H2O2 + AH2 = A + 2 H2O. The enzyme catalyses 2 H2O2 = O2 + 2 H2O. Bifunctional enzyme with both catalase and broad-spectrum peroxidase activity. The chain is Catalase-peroxidase from Halobacterium salinarum (strain ATCC 29341 / DSM 671 / R1).